The following is a 398-amino-acid chain: Leucine aminopeptidase 1 (398 aa).

Positions 1-20 are cleaved as a signal peptide; that stretch reads MKFLQTSLIAAALPAALVSG. The propeptide occupies 21 to 87; it reads RFVIENEGDN…LRAWTQSQAS (67 aa). A glycan (N-linked (GlcNAc...) asparagine) is linked at asparagine 179. Zn(2+)-binding residues include histidine 187, aspartate 206, glutamate 245, and aspartate 272. Cysteine 321 and cysteine 325 are disulfide-bonded. Histidine 354 serves as a coordination point for Zn(2+).

Belongs to the peptidase M28 family. M28E subfamily. In terms of assembly, monomer. Requires Zn(2+) as cofactor.

It localises to the secreted. Functionally, extracellular aminopeptidase that allows assimilation of proteinaceous substrates. In Trichoderma harzianum (Hypocrea lixii), this protein is Leucine aminopeptidase 1 (lap1).